A 275-amino-acid polypeptide reads, in one-letter code: 3',5'-cyclic adenosine monophosphate phosphodiesterase CpdA (275 aa).

7 residues coordinate Fe cation: Asp22, His24, Asp64, Asn94, His164, His203, and His205. AMP-binding positions include His24, Asp64, and Asn94–His95. His205 contacts AMP.

It belongs to the cyclic nucleotide phosphodiesterase class-III family. The cofactor is Fe(2+).

It catalyses the reaction 3',5'-cyclic AMP + H2O = AMP + H(+). Hydrolyzes cAMP to 5'-AMP. Plays an important regulatory role in modulating the intracellular concentration of cAMP, thereby influencing cAMP-dependent processes. This is 3',5'-cyclic adenosine monophosphate phosphodiesterase CpdA from Escherichia coli O157:H7.